Here is a 73-residue protein sequence, read N- to C-terminus: Accessory secretory protein Asp5 (73 aa).

The N-terminal stretch at 1 to 30 is a signal peptide; it reads MQKLLLILTILLALILITLVISLPRENQQF. A helical transmembrane segment spans residues 52–72; sequence IILLIVSILLFLTLIFYMIQT.

In terms of assembly, part of the accessory SecA2/SecY2 protein translocation apparatus required to export cell wall protein GspB.

The protein resides in the cell membrane. Part of the accessory SecA2/SecY2 system specifically required to export GspB, a serine-rich repeat cell wall protein encoded upstream in the same operon. This Streptococcus gordonii protein is Accessory secretory protein Asp5 (asp5).